The sequence spans 117 residues: Large ribosomal subunit protein bL19 (117 aa).

The protein belongs to the bacterial ribosomal protein bL19 family.

Its function is as follows. This protein is located at the 30S-50S ribosomal subunit interface and may play a role in the structure and function of the aminoacyl-tRNA binding site. In Vibrio cholerae serotype O1 (strain ATCC 39541 / Classical Ogawa 395 / O395), this protein is Large ribosomal subunit protein bL19.